The sequence spans 410 residues: Dihydrolipoyllysine-residue acetyltransferase component of pyruvate dehydrogenase complex (410 aa).

The 69-residue stretch at 1-69 (MPDIGTDLVE…TTGSLIAILN (69 aa)) folds into the Lipoyl-binding domain. Lys-35 bears the N6-lipoyllysine mark. The tract at residues 81-100 (SSSYSFKNSKNTSTNSNLGN) is disordered. The Peripheral subunit-binding (PSBD) domain maps to 113 to 150 (HATPTVRRLARKFDIKLENITGTGRKGRILKEDVISYK). His-383 is a catalytic residue.

This sequence belongs to the 2-oxoacid dehydrogenase family. In terms of assembly, forms a 24-polypeptide structural core with octahedral symmetry. It depends on (R)-lipoate as a cofactor.

The enzyme catalyses N(6)-[(R)-dihydrolipoyl]-L-lysyl-[protein] + acetyl-CoA = N(6)-[(R)-S(8)-acetyldihydrolipoyl]-L-lysyl-[protein] + CoA. In terms of biological role, the pyruvate dehydrogenase complex catalyzes the overall conversion of pyruvate to acetyl-CoA and CO(2). It contains multiple copies of three enzymatic components: pyruvate dehydrogenase (E1), dihydrolipoamide acetyltransferase (E2) and lipoamide dehydrogenase (E3). The protein is Dihydrolipoyllysine-residue acetyltransferase component of pyruvate dehydrogenase complex (aceF) of Buchnera aphidicola subsp. Baizongia pistaciae (strain Bp).